The chain runs to 510 residues: Anaerobic nitric oxide reductase transcription regulator NorR (510 aa).

A Sigma-54 factor interaction domain is found at isoleucine 188–valine 417. Residues glycine 216–glutamate 223 and alanine 279–glutamate 288 contribute to the ATP site. A DNA-binding region (H-T-H motif) is located at residues tryptophan 486 to lysine 505.

It functions in the pathway nitrogen metabolism; nitric oxide reduction. Required for the expression of anaerobic nitric oxide (NO) reductase, acts as a transcriptional activator for at least the norVW operon. Activation also requires sigma-54. The chain is Anaerobic nitric oxide reductase transcription regulator NorR from Vibrio vulnificus (strain YJ016).